The following is a 156-amino-acid chain: Large ribosomal subunit protein uL15 (156 aa).

The tract at residues 25–48 (RGIGCGKGKTSGRGHKGQKARSGV) is disordered. The segment covering 34 to 43 (TSGRGHKGQK) has biased composition (basic residues).

This sequence belongs to the universal ribosomal protein uL15 family. As to quaternary structure, part of the 50S ribosomal subunit.

Functionally, binds to the 23S rRNA. This chain is Large ribosomal subunit protein uL15, found in Wolbachia pipientis wMel.